A 141-amino-acid polypeptide reads, in one-letter code: VLSSKDKANVKTAFGKIGGHAADYGAEALERMFLGFPTTKTYFPHFDLSHGSAQVKAHGKKVGDALTKAADHLDDLPSALSALSDLHAHKLRVDPVNFKLLSHCLLVTVAAHHPGDFTPAVHASLDKFLTNVSTVLTSKYR.

The 141-residue stretch at V1 to R141 folds into the Globin domain. The residue at position 3 (S3) is a Phosphoserine. N6-succinyllysine occurs at positions 7 and 11. At K16 the chain carries N6-acetyllysine; alternate. At K16 the chain carries N6-succinyllysine; alternate. At Y24 the chain carries Phosphotyrosine. K40 is subject to N6-succinyllysine. The residue at position 49 (S49) is a Phosphoserine. H58 provides a ligand contact to O2. A heme b-binding site is contributed by H87. Residue S102 is modified to Phosphoserine. The residue at position 108 (T108) is a Phosphothreonine. A Phosphoserine modification is found at S124. Phosphothreonine is present on residues T134 and T137. S138 carries the phosphoserine modification.

Belongs to the globin family. As to quaternary structure, heterotetramer of two alpha chains and two beta chains. Red blood cells.

In terms of biological role, involved in oxygen transport from the lung to the various peripheral tissues. Its function is as follows. Hemopressin acts as an antagonist peptide of the cannabinoid receptor CNR1. Hemopressin-binding efficiently blocks cannabinoid receptor CNR1 and subsequent signaling. This chain is Hemoglobin subunit alpha (HBA), found in Lama vicugna (Vicugna).